The chain runs to 586 residues: Lipoprotein LpqB (586 aa).

The N-terminal stretch at 1–17 is a signal peptide; the sequence is MVRSVFALVFAAVLLGG. Residue Cys18 is the site of N-palmitoyl cysteine attachment. Residue Cys18 is the site of S-diacylglycerol cysteine attachment. A disordered region spans residues 26–45; the sequence is APQAIGTVERPAPSNLPKPI.

This sequence belongs to the LpqB lipoprotein family.

It is found in the cell membrane. The sequence is that of Lipoprotein LpqB from Mycobacterium ulcerans (strain Agy99).